Consider the following 417-residue polypeptide: Tryptophan synthase beta chain (417 aa).

An N6-(pyridoxal phosphate)lysine modification is found at Lys-110.

Belongs to the TrpB family. In terms of assembly, tetramer of two alpha and two beta chains. It depends on pyridoxal 5'-phosphate as a cofactor.

The enzyme catalyses (1S,2R)-1-C-(indol-3-yl)glycerol 3-phosphate + L-serine = D-glyceraldehyde 3-phosphate + L-tryptophan + H2O. It functions in the pathway amino-acid biosynthesis; L-tryptophan biosynthesis; L-tryptophan from chorismate: step 5/5. In terms of biological role, the beta subunit is responsible for the synthesis of L-tryptophan from indole and L-serine. The sequence is that of Tryptophan synthase beta chain from Prochlorococcus marinus (strain NATL2A).